We begin with the raw amino-acid sequence, 303 residues long: MSRLNINFLGKELKNNVITSSGCFGFGEEYSNYFDVNELGAVNLKGITLNKKDGNKGTRIAETPSGMINCIGLENPGIEYFKDNIIKNIKYSTPIILNINGATIDEYVKVAEIANEIERVDFVELNISCPNVKNGGMAFGASCESAESTTKAVKKVLSKKPLIVKLSPNVTDIASIAKAVEDAGADSVSLVNTFLSMKIDTKTRKPLLGNIFGGLSGACIRPIAVRMVYQVYKAVKIPIVGMGGITNYNDALEFILAGASLVSIGAGIFSNPILPIEVINGIDNYLKENNISNIKDIIGAAHL.

FMN contacts are provided by residues serine 21 and 45–46 (KG). Substrate is bound by residues lysine 45 and 69–73 (NCIGL). 2 residues coordinate FMN: asparagine 98 and asparagine 126. Asparagine 126 lines the substrate pocket. Residue cysteine 129 is the Nucleophile of the active site. 2 residues coordinate FMN: lysine 165 and valine 191. Residue 192-193 (NT) participates in substrate binding. Residues glycine 217 and 243–244 (GG) contribute to the FMN site.

Belongs to the dihydroorotate dehydrogenase family. Type 1 subfamily. Heterotetramer of 2 PyrK and 2 PyrD type B subunits. FMN serves as cofactor.

The protein resides in the cytoplasm. It carries out the reaction (S)-dihydroorotate + NAD(+) = orotate + NADH + H(+). Its pathway is pyrimidine metabolism; UMP biosynthesis via de novo pathway; orotate from (S)-dihydroorotate (NAD(+) route): step 1/1. Catalyzes the conversion of dihydroorotate to orotate with NAD(+) as electron acceptor. The polypeptide is Dihydroorotate dehydrogenase B (NAD(+)), catalytic subunit (pyrD) (Brachyspira hyodysenteriae (strain ATCC 49526 / WA1)).